Consider the following 97-residue polypeptide: Acylphosphatase (97 aa).

One can recognise an Acylphosphatase-like domain in the interval 11 to 97 (TYYVRVRGTV…EKRYERFEQH (87 aa)). Catalysis depends on residues R26 and N44. The disordered stretch occupies residues 76–97 (RVTEVSGEERSTEKRYERFEQH). Basic and acidic residues predominate over residues 82 to 97 (GEERSTEKRYERFEQH).

Belongs to the acylphosphatase family.

It carries out the reaction an acyl phosphate + H2O = a carboxylate + phosphate + H(+). The protein is Acylphosphatase (acyP) of Paraburkholderia xenovorans (strain LB400).